A 138-amino-acid chain; its full sequence is Large ribosomal subunit protein uL16c (138 aa).

The protein belongs to the universal ribosomal protein uL16 family. In terms of assembly, part of the 50S ribosomal subunit.

It is found in the plastid. The protein localises to the chloroplast. This chain is Large ribosomal subunit protein uL16c, found in Emiliania huxleyi (Coccolithophore).